Reading from the N-terminus, the 82-residue chain is Small ribosomal subunit protein bS18 (82 aa).

This sequence belongs to the bacterial ribosomal protein bS18 family. Part of the 30S ribosomal subunit. Forms a tight heterodimer with protein bS6.

In terms of biological role, binds as a heterodimer with protein bS6 to the central domain of the 16S rRNA, where it helps stabilize the platform of the 30S subunit. This is Small ribosomal subunit protein bS18 from Chlamydia felis (strain Fe/C-56) (Chlamydophila felis).